The sequence spans 178 residues: Probable inosine/xanthosine triphosphatase (178 aa).

It belongs to the YjjX NTPase family. As to quaternary structure, homodimer. It depends on Mg(2+) as a cofactor. The cofactor is Mn(2+).

The catalysed reaction is XTP + H2O = XDP + phosphate + H(+). It catalyses the reaction ITP + H2O = IDP + phosphate + H(+). In terms of biological role, phosphatase that hydrolyzes non-canonical purine nucleotides such as XTP and ITP to their respective diphosphate derivatives. Probably excludes non-canonical purines from DNA/RNA precursor pool, thus preventing their incorporation into DNA/RNA and avoiding chromosomal lesions. This chain is Probable inosine/xanthosine triphosphatase, found in Pyrobaculum calidifontis (strain DSM 21063 / JCM 11548 / VA1).